The primary structure comprises 241 residues: F-box protein At3g22350 (241 aa).

Residues 1 to 44 enclose the F-box domain; it reads MSDLPLDLVEEILSRVSATSLKRLRSTCKQWNTLFKKRSFSQKH.

This is F-box protein At3g22350 from Arabidopsis thaliana (Mouse-ear cress).